Reading from the N-terminus, the 584-residue chain is uncharacterized protein (584 aa).

The N-terminal stretch at 1 to 27 is a signal peptide; that stretch reads MGLSRKKIFTWPLLLTGMAVVSTTFSS. Residue Cys-28 is the site of N-palmitoyl cysteine attachment. Cys-28 carries the S-diacylglycerol cysteine lipid modification. Residues 530–570 are disordered; it reads NLPKKEGSTNQANQQTNQTNRSTDATKKDSSSDETNKNPLA. Positions 538–552 are enriched in low complexity; the sequence is TNQANQQTNQTNRST. Basic and acidic residues predominate over residues 553–565; sequence DATKKDSSSDETN.

This sequence belongs to the MG067/MG068/MG395 family.

It is found in the cell membrane. This is an uncharacterized protein from Mycoplasmoides gallisepticum (strain R(low / passage 15 / clone 2)) (Mycoplasma gallisepticum).